The chain runs to 623 residues: Oviduct-specific glycoprotein (623 aa).

The first 21 residues, 1–21 (MWKLLLWVGLVLVLKHHDGAA), serve as a signal peptide directing secretion. The 364-residue stretch at 22–385 (HKLVCYFTNW…YVMNDILVRA (364 aa)) folds into the GH18 domain. Cysteine 26 and cysteine 51 are oxidised to a cystine. Chitin-binding positions include 71–72 (LQ), 98–101 (GGWN), tyrosine 142, 211–214 (LSYD), and tryptophan 355. Residues asparagine 402 and asparagine 441 are each glycosylated (N-linked (GlcNAc...) asparagine). 2 disordered regions span residues 539-558 (LTPV…VSPG) and 594-623 (RKIS…PQDG). Positions 613–623 (TSETGTHPQDG) are enriched in polar residues.

It belongs to the glycosyl hydrolase 18 family. In terms of tissue distribution, oviduct.

It localises to the cytoplasmic vesicle. It is found in the secretory vesicle. Its function is as follows. Binds to oocyte zona pellucida in vivo. May play a role in the fertilization process and/or early embryonic development. The polypeptide is Oviduct-specific glycoprotein (OVGP1) (Papio anubis (Olive baboon)).